The chain runs to 528 residues: D-3-phosphoglycerate dehydrogenase (528 aa).

Residues 151-152 (RI), D171, 230-232 (AAR), and D256 contribute to the NAD(+) site. Residue R232 is part of the active site. The active site involves E261. Residue H279 is the Proton donor of the active site. NAD(+) is bound at residue 279–282 (HLGA). In terms of domain architecture, ACT spans 455–528 (NLVIRYVDQP…ANKLEVVNLS (74 aa)).

It belongs to the D-isomer specific 2-hydroxyacid dehydrogenase family.

The catalysed reaction is (2R)-3-phosphoglycerate + NAD(+) = 3-phosphooxypyruvate + NADH + H(+). The enzyme catalyses (R)-2-hydroxyglutarate + NAD(+) = 2-oxoglutarate + NADH + H(+). It participates in amino-acid biosynthesis; L-serine biosynthesis; L-serine from 3-phospho-D-glycerate: step 1/3. Its function is as follows. Catalyzes the reversible oxidation of 3-phospho-D-glycerate to 3-phosphonooxypyruvate, the first step of the phosphorylated L-serine biosynthesis pathway. Also catalyzes the reversible oxidation of 2-hydroxyglutarate to 2-oxoglutarate. This chain is D-3-phosphoglycerate dehydrogenase (serA), found in Mycobacterium leprae (strain TN).